Consider the following 222-residue polypeptide: Superoxide dismutase [Mn], mitochondrial (222 aa).

The transit peptide at Met-1 to Gln-24 directs the protein to the mitochondrion. His-50 is a Mn(2+) binding site. Tyr-58 bears the 3'-nitrotyrosine mark. Residues Lys-68 and Lys-75 each carry the N6-acetyllysine; alternate modification. N6-succinyllysine; alternate is present on residues Lys-68 and Lys-75. His-98 lines the Mn(2+) pocket. Position 114 is an N6-acetyllysine (Lys-114). N6-acetyllysine; alternate is present on residues Lys-122 and Lys-130. N6-succinyllysine; alternate occurs at positions 122 and 130. Positions 183 and 187 each coordinate Mn(2+). Lys-202 carries the N6-acetyllysine modification.

This sequence belongs to the iron/manganese superoxide dismutase family. Homotetramer. Requires Mn(2+) as cofactor. In terms of processing, nitrated under oxidative stress. Nitration coupled with oxidation inhibits the catalytic activity. Post-translationally, acetylation at Lys-122 decreases enzymatic activity. Deacetylated by SIRT3 upon exposure to ionizing radiations or after long fasting. Polyubiquitinated; leading to proteasomal degradation. Deubiquitinated by USP36 which increases protein stability.

It localises to the mitochondrion matrix. It catalyses the reaction 2 superoxide + 2 H(+) = H2O2 + O2. Its function is as follows. Destroys superoxide anion radicals which are normally produced within the cells and which are toxic to biological systems. The sequence is that of Superoxide dismutase [Mn], mitochondrial (SOD2) from Macaca fascicularis (Crab-eating macaque).